The chain runs to 506 residues: DEAD-box ATP-dependent RNA helicase CshA (506 aa).

The short motif at Q2–K30 is the Q motif element. Residues I33 to I203 enclose the Helicase ATP-binding domain. A46 to T53 is an ATP binding site. The DEAD box signature appears at D150 to D153. Residues Q214–L375 form the Helicase C-terminal domain. The disordered stretch occupies residues E436 to K506. Residues K468–T480 are compositionally biased toward basic residues.

This sequence belongs to the DEAD box helicase family. CshA subfamily. As to quaternary structure, oligomerizes, may be a member of the RNA degradosome.

It is found in the cytoplasm. It carries out the reaction ATP + H2O = ADP + phosphate + H(+). Its function is as follows. DEAD-box RNA helicase possibly involved in RNA degradation. Unwinds dsRNA in both 5'- and 3'-directions, has RNA-dependent ATPase activity. In Staphylococcus aureus (strain MW2), this protein is DEAD-box ATP-dependent RNA helicase CshA.